A 208-amino-acid chain; its full sequence is Kininogen-1b (208 aa).

A signal peptide spans 1 to 23; sequence MRLWFCLSFFIVLCLEHFPETLA. A compositionally biased stretch (basic and acidic residues) spans 27–44; sequence NVPESEEKTEQYLRDLPK. The disordered stretch occupies residues 27-208; it reads NVPESEEKTE…RGKFHSQSHV (182 aa).

It belongs to the bradykinin-related peptide family. Expressed by the skin glands.

Its subcellular location is the secreted. Functionally, in vitro, produces constriction of guinea pig ileum smooth muscle. May target bradykinin receptors (BDKRB). In Bombina maxima (Giant fire-bellied toad), this protein is Kininogen-1b.